The chain runs to 224 residues: Phosphoribosylformylglycinamidine synthase subunit PurQ (224 aa).

The region spanning 2–224 (KFAVIVFPGS…IVDNFVKGGV (223 aa)) is the Glutamine amidotransferase type-1 domain. Cysteine 86 (nucleophile) is an active-site residue. Active-site residues include histidine 194 and glutamate 196.

As to quaternary structure, part of the FGAM synthase complex composed of 1 PurL, 1 PurQ and 2 PurS subunits.

It localises to the cytoplasm. The enzyme catalyses N(2)-formyl-N(1)-(5-phospho-beta-D-ribosyl)glycinamide + L-glutamine + ATP + H2O = 2-formamido-N(1)-(5-O-phospho-beta-D-ribosyl)acetamidine + L-glutamate + ADP + phosphate + H(+). The catalysed reaction is L-glutamine + H2O = L-glutamate + NH4(+). It functions in the pathway purine metabolism; IMP biosynthesis via de novo pathway; 5-amino-1-(5-phospho-D-ribosyl)imidazole from N(2)-formyl-N(1)-(5-phospho-D-ribosyl)glycinamide: step 1/2. Its function is as follows. Part of the phosphoribosylformylglycinamidine synthase complex involved in the purines biosynthetic pathway. Catalyzes the ATP-dependent conversion of formylglycinamide ribonucleotide (FGAR) and glutamine to yield formylglycinamidine ribonucleotide (FGAM) and glutamate. The FGAM synthase complex is composed of three subunits. PurQ produces an ammonia molecule by converting glutamine to glutamate. PurL transfers the ammonia molecule to FGAR to form FGAM in an ATP-dependent manner. PurS interacts with PurQ and PurL and is thought to assist in the transfer of the ammonia molecule from PurQ to PurL. This chain is Phosphoribosylformylglycinamidine synthase subunit PurQ, found in Caldanaerobacter subterraneus subsp. tengcongensis (strain DSM 15242 / JCM 11007 / NBRC 100824 / MB4) (Thermoanaerobacter tengcongensis).